The chain runs to 614 residues: Syringomycin synthase SyrB1 (614 aa).

The 76-residue stretch at 535 to 610 (KGLSEQEHFV…VLADHITRSL (76 aa)) folds into the Carrier domain. An O-(pantetheine 4'-phosphoryl)serine modification is found at Ser-570.

It belongs to the ATP-dependent AMP-binding enzyme family. Pantetheine 4'-phosphate serves as cofactor.

It carries out the reaction holo-[peptidyl-carrier protein] + L-threonine + ATP = L-threonyl-[peptidyl-carrier protein] + AMP + diphosphate. In terms of biological role, involved in the biosynthesis of syringomycin E, a cyclic lipodepsinonapeptide toxin with phytotoxic activity. Specifically adenylates L-threonine and loads it onto its peptidyl carrier domain, via a thioester linkage to the phosphopanthetheine moiety. Is highly specific for L-threonine. In Pseudomonas syringae pv. syringae, this protein is Syringomycin synthase SyrB1.